Here is a 195-residue protein sequence, read N- to C-terminus: UPF0314 protein RHECIAT_CH0004233 (195 aa).

4 consecutive transmembrane segments (helical) span residues 15–35 (FWFVACVAVLVAQIVTEYLMG), 64–84 (WYTPSHIIHGFLFYGLGYLIL), 127–147 (GDSILNSAMDTVFMCVGFFFA), and 150–170 (APVALTVAIAIFFEIFTGYVI).

This sequence belongs to the UPF0314 family.

It localises to the cell membrane. The chain is UPF0314 protein RHECIAT_CH0004233 from Rhizobium etli (strain CIAT 652).